The primary structure comprises 183 residues: ATP synthase subunit b, chloroplastic (183 aa).

A helical membrane pass occupies residues 25–45; it reads DILATNLINLTVVVGVLIFFG.

This sequence belongs to the ATPase B chain family. As to quaternary structure, F-type ATPases have 2 components, F(1) - the catalytic core - and F(0) - the membrane proton channel. F(1) has five subunits: alpha(3), beta(3), gamma(1), delta(1), epsilon(1). F(0) has four main subunits: a(1), b(1), b'(1) and c(10-14). The alpha and beta chains form an alternating ring which encloses part of the gamma chain. F(1) is attached to F(0) by a central stalk formed by the gamma and epsilon chains, while a peripheral stalk is formed by the delta, b and b' chains.

It localises to the plastid. Its subcellular location is the chloroplast thylakoid membrane. Its function is as follows. F(1)F(0) ATP synthase produces ATP from ADP in the presence of a proton or sodium gradient. F-type ATPases consist of two structural domains, F(1) containing the extramembraneous catalytic core and F(0) containing the membrane proton channel, linked together by a central stalk and a peripheral stalk. During catalysis, ATP synthesis in the catalytic domain of F(1) is coupled via a rotary mechanism of the central stalk subunits to proton translocation. Component of the F(0) channel, it forms part of the peripheral stalk, linking F(1) to F(0). This chain is ATP synthase subunit b, chloroplastic, found in Zea mays (Maize).